The chain runs to 236 residues: 2-C-methyl-D-erythritol 4-phosphate cytidylyltransferase (236 aa).

This sequence belongs to the IspD/TarI cytidylyltransferase family. IspD subfamily. In terms of assembly, homodimer.

It carries out the reaction 2-C-methyl-D-erythritol 4-phosphate + CTP + H(+) = 4-CDP-2-C-methyl-D-erythritol + diphosphate. It functions in the pathway isoprenoid biosynthesis; isopentenyl diphosphate biosynthesis via DXP pathway; isopentenyl diphosphate from 1-deoxy-D-xylulose 5-phosphate: step 2/6. Functionally, catalyzes the formation of 4-diphosphocytidyl-2-C-methyl-D-erythritol from CTP and 2-C-methyl-D-erythritol 4-phosphate (MEP). This Salmonella typhimurium (strain LT2 / SGSC1412 / ATCC 700720) protein is 2-C-methyl-D-erythritol 4-phosphate cytidylyltransferase.